A 98-amino-acid chain; its full sequence is Integration host factor subunit alpha (98 aa).

Positions 53-69 (DLREKNERPGRNPKTGE) are enriched in basic and acidic residues. Residues 53-72 (DLREKNERPGRNPKTGEDIP) form a disordered region.

The protein belongs to the bacterial histone-like protein family. As to quaternary structure, heterodimer of an alpha and a beta chain.

Functionally, this protein is one of the two subunits of integration host factor, a specific DNA-binding protein that functions in genetic recombination as well as in transcriptional and translational control. This Vibrio atlanticus (strain LGP32) (Vibrio splendidus (strain Mel32)) protein is Integration host factor subunit alpha.